The primary structure comprises 158 residues: Endoribonuclease YbeY (158 aa).

Zn(2+)-binding residues include His119, His123, and His129.

This sequence belongs to the endoribonuclease YbeY family. The cofactor is Zn(2+).

It localises to the cytoplasm. Single strand-specific metallo-endoribonuclease involved in late-stage 70S ribosome quality control and in maturation of the 3' terminus of the 16S rRNA. The sequence is that of Endoribonuclease YbeY from Shewanella sediminis (strain HAW-EB3).